Reading from the N-terminus, the 186-residue chain is Large ribosomal subunit protein uL10 (186 aa).

The protein belongs to the universal ribosomal protein uL10 family. In terms of assembly, part of the ribosomal stalk of the 50S ribosomal subunit. The N-terminus interacts with L11 and the large rRNA to form the base of the stalk. The C-terminus forms an elongated spine to which L12 dimers bind in a sequential fashion forming a multimeric L10(L12)X complex.

Forms part of the ribosomal stalk, playing a central role in the interaction of the ribosome with GTP-bound translation factors. The protein is Large ribosomal subunit protein uL10 of Rhodococcus jostii (strain RHA1).